Consider the following 76-residue polypeptide: ATP synthase peripheral stalk subunit F6, mitochondrial (76 aa).

N6-acetyllysine occurs at positions 9, 14, and 47. An N6-acetyllysine; alternate mark is found at Lys-52 and Lys-67. 2 positions are modified to N6-succinyllysine; alternate: Lys-52 and Lys-67. Lys-73 is modified (N6-acetyllysine). Ser-76 is modified (phosphoserine).

It belongs to the eukaryotic ATPase subunit F6 family. As to quaternary structure, component of the ATP synthase complex composed at least of ATP5F1A/subunit alpha, ATP5F1B/subunit beta, ATP5MC1/subunit c (homooctomer), MT-ATP6/subunit a, MT-ATP8/subunit 8, ATP5ME/subunit e, ATP5MF/subunit f, ATP5MG/subunit g, ATP5MK/subunit k, ATP5MJ/subunit j, ATP5F1C/subunit gamma, ATP5F1D/subunit delta, ATP5F1E/subunit epsilon, ATP5PF/subunit F6, ATP5PB/subunit b, ATP5PD/subunit d, ATP5PO/subunit OSCP. ATP synthase complex consists of a soluble F(1) head domain (subunits alpha(3) and beta(3)) - the catalytic core - and a membrane F(0) domain - the membrane proton channel (subunits c, a, 8, e, f, g, k and j). These two domains are linked by a central stalk (subunits gamma, delta, and epsilon) rotating inside the F1 region and a stationary peripheral stalk (subunits F6, b, d, and OSCP).

It is found in the mitochondrion. The protein localises to the mitochondrion inner membrane. Subunit F6, of the mitochondrial membrane ATP synthase complex (F(1)F(0) ATP synthase or Complex V) that produces ATP from ADP in the presence of a proton gradient across the membrane which is generated by electron transport complexes of the respiratory chain. ATP synthase complex consist of a soluble F(1) head domain - the catalytic core - and a membrane F(1) domain - the membrane proton channel. These two domains are linked by a central stalk rotating inside the F(1) region and a stationary peripheral stalk. During catalysis, ATP synthesis in the catalytic domain of F(1) is coupled via a rotary mechanism of the central stalk subunits to proton translocation. In vivo, can only synthesize ATP although its ATP hydrolase activity can be activated artificially in vitro. Part of the complex F(0) domain. Part of the complex F(0) domain and the peripheric stalk, which acts as a stator to hold the catalytic alpha(3)beta(3) subcomplex and subunit a/ATP6 static relative to the rotary elements. The chain is ATP synthase peripheral stalk subunit F6, mitochondrial from Sus scrofa (Pig).